The sequence spans 141 residues: Large ribosomal subunit protein uL16 (141 aa).

This sequence belongs to the universal ribosomal protein uL16 family. In terms of assembly, part of the 50S ribosomal subunit. Contacts the CTC protein (RL25).

In terms of biological role, binds the 5S and 23S rRNAs and is also seen to make contacts with the A and P site tRNAs. Interacts with A site tRNA mimics, and is probably one of the key factors, along with a helix of the 23S rRNA, in positioning tRNA stems in the peptidyl-transferase center. In Deinococcus radiodurans (strain ATCC 13939 / DSM 20539 / JCM 16871 / CCUG 27074 / LMG 4051 / NBRC 15346 / NCIMB 9279 / VKM B-1422 / R1), this protein is Large ribosomal subunit protein uL16 (rplP).